The sequence spans 193 residues: Segregation and condensation protein B (193 aa).

It belongs to the ScpB family. In terms of assembly, homodimer. Homodimerization may be required to stabilize the binding of ScpA to the Smc head domains. Component of a cohesin-like complex composed of ScpA, ScpB and the Smc homodimer, in which ScpA and ScpB bind to the head domain of Smc. The presence of the three proteins is required for the association of the complex with DNA.

Its subcellular location is the cytoplasm. Participates in chromosomal partition during cell division. May act via the formation of a condensin-like complex containing Smc and ScpA that pull DNA away from mid-cell into both cell halves. This Clostridium botulinum (strain 657 / Type Ba4) protein is Segregation and condensation protein B.